A 486-amino-acid polypeptide reads, in one-letter code: BTB/POZ domain and ankyrin repeat-containing protein NBCL (486 aa).

The 91-residue stretch at 25–115 folds into the BTB domain; it reads SDVTFSVEGR…LYSGQVSIVP (91 aa). Residues 121-135 form a C2HC NPR-type zinc finger; that stretch reads RPNCGERGCWHTHCS. Zn(2+)-binding residues include C124, C129, H131, and C134. ANK repeat units lie at residues 257–286, 287–316, 321–350, and 354–388; these read QKIR…LNLD, EALA…DVNY, AGKT…DPNV, and DNVT…KLRL. 2 disordered regions span residues 403–441 and 464–486; these read EEGN…NNHN and QMSD…HHDY. 2 stretches are compositionally biased toward low complexity: residues 406–418 and 432–441; these read NANN…TTTT and SSSSSGNNHN. Over residues 466–475 the composition is skewed to basic and acidic residues; sequence SDDHGGRHGD.

Belongs to the plant 'ANKYRIN-BTB/POZ' family. 'NOOT-BOP-COCH-like' (NBCL) subfamily. Homodimer.

The protein localises to the nucleus. It is found in the cytoplasm. Its subcellular location is the cell membrane. Its pathway is protein modification; protein ubiquitination. May act as a substrate-specific adapter of an E3 ubiquitin-protein ligase complex (CUL3-RBX1-BTB) which mediates the ubiquitination and subsequent proteasomal degradation of target proteins. Transcriptional co-regulator involved in the promotion of leaf and floral meristem fate and determinacy. Necessary for the development of stipules at the base of petioles. Required for the abscission of senescent organs, probably by regulating the cell wall disorganization in abscission zones (AZs, e.g. pulvini at the base of leaves). Promotes slightly root-cap border cells separation from the root tip. Involved in the coordination of the symbiotic nodule developmental program; promotes the formation of root nodules by interacting directly with APP1 to modulate the expression of the nuclear transcription factor Y subunit (NF-YA1), a key nodulin. Necessary for the robust maintenance of nodule identity throughout the nodule developmental program. This chain is BTB/POZ domain and ankyrin repeat-containing protein NBCL, found in Lupinus angustifolius (Narrow-leaved blue lupine).